The chain runs to 345 residues: 4-hydroxy-2-oxovalerate aldolase 3 (345 aa).

Residues 8 to 260 (ITVHDMTLRD…ETGVDVWKIQ (253 aa)) form the Pyruvate carboxyltransferase domain. 16-17 (RD) is a binding site for substrate. Asp-17 provides a ligand contact to Mn(2+). His-20 (proton acceptor) is an active-site residue. Substrate is bound by residues Ser-170 and His-199. Residues His-199 and His-201 each contribute to the Mn(2+) site. Tyr-290 serves as a coordination point for substrate.

This sequence belongs to the 4-hydroxy-2-oxovalerate aldolase family.

The catalysed reaction is (S)-4-hydroxy-2-oxopentanoate = acetaldehyde + pyruvate. This Comamonas testosteroni (Pseudomonas testosteroni) protein is 4-hydroxy-2-oxovalerate aldolase 3 (aphG).